Reading from the N-terminus, the 409-residue chain is Peptidase T (409 aa).

Histidine 78 is a Zn(2+) binding site. Residue aspartate 80 is part of the active site. Aspartate 139 is a binding site for Zn(2+). Residue glutamate 173 is the Proton acceptor of the active site. 3 residues coordinate Zn(2+): glutamate 174, aspartate 196, and histidine 378.

It belongs to the peptidase M20B family. Requires Zn(2+) as cofactor.

The protein localises to the cytoplasm. It carries out the reaction Release of the N-terminal residue from a tripeptide.. Cleaves the N-terminal amino acid of tripeptides. This is Peptidase T from Shewanella sediminis (strain HAW-EB3).